The sequence spans 366 residues: Flagellar P-ring protein (366 aa).

The signal sequence occupies residues 1–20 (MVIKFLSALILLLVTTAAQA).

The protein belongs to the FlgI family. In terms of assembly, the basal body constitutes a major portion of the flagellar organelle and consists of four rings (L,P,S, and M) mounted on a central rod.

Its subcellular location is the periplasm. The protein localises to the bacterial flagellum basal body. Assembles around the rod to form the L-ring and probably protects the motor/basal body from shearing forces during rotation. The chain is Flagellar P-ring protein from Escherichia coli (strain UTI89 / UPEC).